A 235-amino-acid polypeptide reads, in one-letter code: Large ribosomal subunit protein uL1 (235 aa).

This sequence belongs to the universal ribosomal protein uL1 family. As to quaternary structure, part of the 50S ribosomal subunit.

Its function is as follows. Binds directly to 23S rRNA. The L1 stalk is quite mobile in the ribosome, and is involved in E site tRNA release. Functionally, protein L1 is also a translational repressor protein, it controls the translation of the L11 operon by binding to its mRNA. This is Large ribosomal subunit protein uL1 from Nitratidesulfovibrio vulgaris (strain DSM 19637 / Miyazaki F) (Desulfovibrio vulgaris).